Reading from the N-terminus, the 268-residue chain is Small ribosomal subunit protein uS2 (268 aa).

Residues 228–268 (QLDSEQDYEDFDESISDEYDDYEDEEEYEEQDLEVDASEDE) form a disordered region. The span at 231–268 (SEQDYEDFDESISDEYDDYEDEEEYEEQDLEVDASEDE) shows a compositional bias: acidic residues.

Belongs to the universal ribosomal protein uS2 family.

The sequence is that of Small ribosomal subunit protein uS2 from Rippkaea orientalis (strain PCC 8801 / RF-1) (Cyanothece sp. (strain PCC 8801)).